The sequence spans 201 residues: Oligoribonuclease (201 aa).

In terms of domain architecture, Exonuclease spans 5–169; that stretch reads MVWIDCEMTG…ADIRDSITEL (165 aa). Residue Tyr-126 is part of the active site.

Belongs to the oligoribonuclease family.

It localises to the cytoplasm. Functionally, 3'-to-5' exoribonuclease specific for small oligoribonucleotides. The protein is Oligoribonuclease of Streptomyces griseus.